A 212-amino-acid chain; its full sequence is Pyridoxine/pyridoxamine 5'-phosphate oxidase (212 aa).

Substrate contacts are provided by residues 8 to 11 (RREY) and lysine 66. FMN-binding positions include 61–66 (RIVLLK), 76–77 (FT), arginine 82, lysine 83, and glutamine 105. Positions 123, 127, and 131 each coordinate substrate. FMN is bound by residues 140–141 (QS) and tryptophan 185. 191–193 (RLH) serves as a coordination point for substrate. Arginine 195 is an FMN binding site.

Belongs to the pyridoxamine 5'-phosphate oxidase family. In terms of assembly, homodimer. Requires FMN as cofactor.

It catalyses the reaction pyridoxamine 5'-phosphate + O2 + H2O = pyridoxal 5'-phosphate + H2O2 + NH4(+). The catalysed reaction is pyridoxine 5'-phosphate + O2 = pyridoxal 5'-phosphate + H2O2. Its pathway is cofactor metabolism; pyridoxal 5'-phosphate salvage; pyridoxal 5'-phosphate from pyridoxamine 5'-phosphate: step 1/1. The protein operates within cofactor metabolism; pyridoxal 5'-phosphate salvage; pyridoxal 5'-phosphate from pyridoxine 5'-phosphate: step 1/1. Its function is as follows. Catalyzes the oxidation of either pyridoxine 5'-phosphate (PNP) or pyridoxamine 5'-phosphate (PMP) into pyridoxal 5'-phosphate (PLP). The sequence is that of Pyridoxine/pyridoxamine 5'-phosphate oxidase from Shewanella pealeana (strain ATCC 700345 / ANG-SQ1).